The sequence spans 136 residues: Large ribosomal subunit protein uL16c (136 aa).

This sequence belongs to the universal ribosomal protein uL16 family. As to quaternary structure, part of the 50S ribosomal subunit.

The protein localises to the plastid. The protein resides in the chloroplast. The sequence is that of Large ribosomal subunit protein uL16c from Illicium oligandrum (Star anise).